Consider the following 342-residue polypeptide: Nicotinate-nucleotide--dimethylbenzimidazole phosphoribosyltransferase (342 aa).

Catalysis depends on E311, which acts as the Proton acceptor.

Belongs to the CobT family.

It carries out the reaction 5,6-dimethylbenzimidazole + nicotinate beta-D-ribonucleotide = alpha-ribazole 5'-phosphate + nicotinate + H(+). The protein operates within nucleoside biosynthesis; alpha-ribazole biosynthesis; alpha-ribazole from 5,6-dimethylbenzimidazole: step 1/2. Its function is as follows. Catalyzes the synthesis of alpha-ribazole-5'-phosphate from nicotinate mononucleotide (NAMN) and 5,6-dimethylbenzimidazole (DMB). In Vibrio vulnificus (strain CMCP6), this protein is Nicotinate-nucleotide--dimethylbenzimidazole phosphoribosyltransferase.